A 157-amino-acid polypeptide reads, in one-letter code: Tripartite terminase subunit 2 (157 aa).

The segment at 1 to 69 is disordered; sequence MSWAKQRVPF…DGEDGHALPD (69 aa). Positions 11-27 are enriched in acidic residues; sequence LDDDDGEEENDVQDDVD.

This sequence belongs to the herpesviridae TRM2 protein family. In terms of assembly, associates with TRM1 and TRM3 to form the tripartite terminase complex.

It localises to the host nucleus. Component of the molecular motor that translocates viral genomic DNA in empty capsid during DNA packaging. Forms a tripartite terminase complex together with TRM1 and TRM3 in the host cytoplasm. Once the complex reaches the host nucleus, it interacts with the capsid portal vertex. This portal forms a ring in which genomic DNA is translocated into the capsid. This Homo sapiens (Human) protein is Tripartite terminase subunit 2.